The chain runs to 152 residues: Dynein light chain Tctex-type protein 2B (152 aa).

Belongs to the dynein light chain Tctex-type family. In terms of assembly, light chain of the cytoplasmic dynein complex 2, a multisubunit complex composed at least of eleven different proteins. The cytoplasmic dynein 2 complex consists of two catalytic heavy chains (HCs) and a number of non-catalytic subunits presented by intermediate chains (ICs), light intermediate chains (LICs) and light chains (LCs). Among them, a heavy chain (DYNC2H1), two intermediate chains (DYNC2I2 and DYNC2I1), a light intermediate chain (DYNC2LI1), and a light chain (DYNLT2B) are unique to the dynein-2 complex, but a subset of the light chains are also shared by dynein-1 and dynein-2 complexes. The dimer DYNLT2B-DYNLT1/DYNLT3 interacts with DYNC2I1; this interaction is crucial for retrograde trafficking of ciliary proteins.

It localises to the dynein axonemal particle. Functionally, acts as one of several non-catalytic accessory components of the cytoplasmic dynein 2 complex (dynein-2 complex), a motor protein complex that drives the movement of cargos along microtubules within cilia and flagella in concert with the intraflagellar transport (IFT) system. Required for proper retrograde ciliary transport. This chain is Dynein light chain Tctex-type protein 2B (DYNLT2B), found in Bos taurus (Bovine).